A 421-amino-acid chain; its full sequence is MAENSNGALGCVVRCLSSESELQELCREEQLCCAELGVTRKNLSDFEVEYLWNYKKVQDQELYLVKWKYYPDSESTWEPRHHLKCNNLLKQFHLDLERELLRRAKAAGTKKTAVRCPRRLDQSLSHYLVLKAKQRKRLRQWAQQLNAKRSHLGLILVENEVDLEGPPRDFVYINEYRVGEGVTINRISAGCKCRDCFSDEGGCCPGAFQHKKAYNNEGQVKVKPGFPIYECNSCCRCGPSCPNRVVQKGIQYKFCIFRTSDGRGWGVRTLEKIRKNSFVMEYVGEIITSEEAERRGQIYDRQGTTYLFDLDYVEDVYTVDAARYGNISHFVNHSCKPNLQVYNVFIDNLDERLPRIAFFATRTIRTGEELTFDYNMQVDPVDVESSKMDSNFGIAGLPASPKKRVRVECKCGVSSCRKYLF.

The Chromo domain maps to 46–104 (FEVEYLWNYKKVQDQELYLVKWKYYPDSESTWEPRHHLKCNNLLKQFHLDLERELLRRA). The Pre-SET domain occupies 189–249 (AGCKCRDCFS…SCPNRVVQKG (61 aa)). Zn(2+) is bound by residues cysteine 191, cysteine 193, cysteine 196, cysteine 203, cysteine 204, cysteine 231, cysteine 235, cysteine 237, and cysteine 241. The 124-residue stretch at 252-375 (YKFCIFRTSD…TGEELTFDYN (124 aa)) folds into the SET domain. S-adenosyl-L-methionine is bound by residues 263 to 265 (RGW), tyrosine 306, and 332 to 333 (NH). Positions 335, 409, 411, and 416 each coordinate Zn(2+). In terms of domain architecture, Post-SET spans 405 to 421 (VRVECKCGVSSCRKYLF).

The protein belongs to the class V-like SAM-binding methyltransferase superfamily. Histone-lysine methyltransferase family. Suvar3-9 subfamily.

It localises to the nucleus. It is found in the chromosome. The protein localises to the centromere. It catalyses the reaction L-lysyl(9)-[histone H3] + 3 S-adenosyl-L-methionine = N(6),N(6),N(6)-trimethyl-L-lysyl(9)-[histone H3] + 3 S-adenosyl-L-homocysteine + 3 H(+). In terms of biological role, histone methyltransferase that specifically trimethylates 'Lys-9' of histone H3 using monomethylated H3 'Lys-9' as substrate. H3 'Lys-9' trimethylation represents a specific tag for epigenetic transcriptional repression by recruiting HP1 (CBX1, CBX3 and/or CBX5) proteins to methylated histones. Mainly functions in heterochromatin regions, thereby playing a central role in the establishment of constitutive heterochromatin at pericentric and telomere regions. H3 'Lys-9' trimethylation is also required to direct DNA methylation at pericentric repeats. SUV39H1 is targeted to histone H3 via its interaction with RB1 and is involved in many processes. This chain is Histone-lysine N-methyltransferase SUV39H1 (suv39h1), found in Xenopus laevis (African clawed frog).